A 188-amino-acid polypeptide reads, in one-letter code: ATP synthase subunit delta (188 aa).

The protein belongs to the ATPase delta chain family. As to quaternary structure, F-type ATPases have 2 components, F(1) - the catalytic core - and F(0) - the membrane proton channel. F(1) has five subunits: alpha(3), beta(3), gamma(1), delta(1), epsilon(1). F(0) has three main subunits: a(1), b(2) and c(10-14). The alpha and beta chains form an alternating ring which encloses part of the gamma chain. F(1) is attached to F(0) by a central stalk formed by the gamma and epsilon chains, while a peripheral stalk is formed by the delta and b chains.

The protein resides in the cell inner membrane. Functionally, f(1)F(0) ATP synthase produces ATP from ADP in the presence of a proton or sodium gradient. F-type ATPases consist of two structural domains, F(1) containing the extramembraneous catalytic core and F(0) containing the membrane proton channel, linked together by a central stalk and a peripheral stalk. During catalysis, ATP synthesis in the catalytic domain of F(1) is coupled via a rotary mechanism of the central stalk subunits to proton translocation. Its function is as follows. This protein is part of the stalk that links CF(0) to CF(1). It either transmits conformational changes from CF(0) to CF(1) or is implicated in proton conduction. The protein is ATP synthase subunit delta of Rhizobium meliloti (strain 1021) (Ensifer meliloti).